A 127-amino-acid chain; its full sequence is UPF0102 protein Glov_2230 (127 aa).

Belongs to the UPF0102 family.

This is UPF0102 protein Glov_2230 from Trichlorobacter lovleyi (strain ATCC BAA-1151 / DSM 17278 / SZ) (Geobacter lovleyi).